The following is a 322-amino-acid chain: Transcription initiation factor IIB (322 aa).

A run of 2 repeats spans residues 125-213 (SLIN…VRDL) and 224-305 (NFVY…EIAQ).

The protein belongs to the TFIIB family.

Functionally, stabilizes TBP binding to an archaeal box-A promoter. Also responsible for recruiting RNA polymerase II to the pre-initiation complex (DNA-TBP-TFIIB). This chain is Transcription initiation factor IIB, found in Aeropyrum pernix (strain ATCC 700893 / DSM 11879 / JCM 9820 / NBRC 100138 / K1).